The sequence spans 178 residues: Mediator of RNA polymerase II transcription subunit 31 (178 aa).

Positions 129–140 (EGQELEESEDEA) are enriched in acidic residues. Positions 129-178 (EGQELEESEDEADIRQKDTEDEDDEETMKKPDADTAEKNSTTSTVSKKEK) are disordered. Over residues 155–165 (TMKKPDADTAE) the composition is skewed to basic and acidic residues. Residues 166–178 (KNSTTSTVSKKEK) are compositionally biased toward polar residues.

This sequence belongs to the Mediator complex subunit 31 family. In terms of assembly, component of the Mediator complex.

It localises to the nucleus. Its function is as follows. Component of the Mediator complex, a coactivator involved in the regulated transcription of nearly all RNA polymerase II-dependent genes. Mediator functions as a bridge to convey information from gene-specific regulatory proteins to the basal RNA polymerase II transcription machinery. Mediator is recruited to promoters by direct interactions with regulatory proteins and serves as a scaffold for the assembly of a functional preinitiation complex with RNA polymerase II and the general transcription factors. The chain is Mediator of RNA polymerase II transcription subunit 31 from Caenorhabditis elegans.